The following is a 350-amino-acid chain: Ion-translocating oxidoreductase complex subunit D (350 aa).

Transmembrane regions (helical) follow at residues Tyr-37 to Ala-57, Ala-68 to Ala-88, Ile-89 to Val-109, and Ile-120 to Thr-140. Thr-185 bears the FMN phosphoryl threonine mark. The next 5 helical transmembrane spans lie at Gly-212–Leu-232, Trp-239–Leu-259, Val-265–Thr-285, Ala-291–Ile-311, and Gly-315–Ile-335.

It belongs to the NqrB/RnfD family. The complex is composed of six subunits: RnfA, RnfB, RnfC, RnfD, RnfE and RnfG. FMN serves as cofactor.

It localises to the cell inner membrane. Functionally, part of a membrane-bound complex that couples electron transfer with translocation of ions across the membrane. In Shewanella pealeana (strain ATCC 700345 / ANG-SQ1), this protein is Ion-translocating oxidoreductase complex subunit D.